The chain runs to 283 residues: Probable cytochrome c oxidase subunit 3 (283 aa).

6 helical membrane passes run 26 to 46 (PWPV…VSFM), 51 to 71 (FNIY…YSWW), 94 to 114 (IGMA…FASF), 179 to 199 (CVTA…MQAY), 217 to 237 (FYLA…FLII), and 261 to 281 (AWYW…VYIF).

The protein belongs to the cytochrome c oxidase subunit 3 family.

Its subcellular location is the cell membrane. It catalyses the reaction 4 Fe(II)-[cytochrome c] + O2 + 8 H(+)(in) = 4 Fe(III)-[cytochrome c] + 2 H2O + 4 H(+)(out). This Rickettsia conorii (strain ATCC VR-613 / Malish 7) protein is Probable cytochrome c oxidase subunit 3 (ctaE).